The chain runs to 356 residues: Glutamine synthetase (356 aa).

The region spanning 19 to 99 is the GS beta-grasp domain; that stretch reads VIAEYIWIGG…VICDTYTPAG (81 aa). Positions 106–356 constitute a GS catalytic domain; that stretch reads KRHGAAKIFS…IAETTLLWKP (251 aa).

It belongs to the glutamine synthetase family. In terms of assembly, homooctamer. Found at highest levels in root nodules.

It is found in the cytoplasm. The enzyme catalyses L-glutamate + NH4(+) + ATP = L-glutamine + ADP + phosphate + H(+). This chain is Glutamine synthetase (GLN1), found in Alnus glutinosa (European alder).